Consider the following 428-residue polypeptide: Enolase (428 aa).

Gln163 contacts (2R)-2-phosphoglycerate. Glu205 acts as the Proton donor in catalysis. Mg(2+) contacts are provided by Asp242, Glu285, and Asp312. (2R)-2-phosphoglycerate-binding residues include Lys337, Arg366, Ser367, and Lys388. Lys337 acts as the Proton acceptor in catalysis.

This sequence belongs to the enolase family. Mg(2+) serves as cofactor.

It localises to the cytoplasm. The protein resides in the secreted. It is found in the cell surface. The enzyme catalyses (2R)-2-phosphoglycerate = phosphoenolpyruvate + H2O. The protein operates within carbohydrate degradation; glycolysis; pyruvate from D-glyceraldehyde 3-phosphate: step 4/5. Its function is as follows. Catalyzes the reversible conversion of 2-phosphoglycerate (2-PG) into phosphoenolpyruvate (PEP). It is essential for the degradation of carbohydrates via glycolysis. In Novosphingobium aromaticivorans (strain ATCC 700278 / DSM 12444 / CCUG 56034 / CIP 105152 / NBRC 16084 / F199), this protein is Enolase.